The sequence spans 377 residues: Compound eye opsin BCRH2 (377 aa).

The Extracellular portion of the chain corresponds to 1-53 (MTNATGPQMAYYGAASMDFGYPEGVSIVDFVRPEIKPYVHQHWYNYPPVNPMW). The N-linked (GlcNAc...) asparagine glycan is linked to asparagine 3. A helical membrane pass occupies residues 54 to 78 (HYLLGVIYLFLGTVSIFGNGLVIYL). The Cytoplasmic portion of the chain corresponds to 79 to 90 (FNKSAALRTPAN). A helical membrane pass occupies residues 91-115 (ILVVNLALSDLIMLTTNVPFFTYNC). The Extracellular portion of the chain corresponds to 116–131 (FSGGVWMFSPQYCEIY). Cysteine 128 and cysteine 205 are disulfide-bonded. Residues 132–151 (ACLGAITGVCSIWLLCMISF) traverse the membrane as a helical segment. Residues 152-170 (DRYNIICNGFNGPKLTTGK) lie on the Cytoplasmic side of the membrane. The chain crosses the membrane as a helical span at residues 171 to 194 (AVVFALISWVIAIGCALPPFFGWG). Topologically, residues 195–218 (NYILEGILDSCSYDYLTQDFNTFS) are extracellular. The chain crosses the membrane as a helical span at residues 219–246 (YNIFIFVFDYFLPAAIIVFSYVFIVKAI). Residues 247–281 (FAHEAAMRAQAKKMNVSTLRSNEADAQRAEIRIAK) are Cytoplasmic-facing. A helical membrane pass occupies residues 282 to 305 (TALVNVSLWFICWTPYALISLKGV). The Extracellular segment spans residues 306 to 313 (MGDTSGIT). The helical transmembrane segment at 314–338 (PLVSTLPALLAKSCSCYNPFVYAIS) threads the bilayer. The residue at position 325 (lysine 325) is an N6-(retinylidene)lysine. At 339-377 (HPKYRLAITQHLPWFCVHETETKSNDDSQSNSTVAQDKA) the chain is on the cytoplasmic side.

It belongs to the G-protein coupled receptor 1 family. Opsin subfamily. In terms of processing, phosphorylated on some or all of the serine and threonine residues present in the C-terminal region. In terms of tissue distribution, expressed in all of the seven retinular cells (R1-R7) forming the main rhabdom in each ommatidium.

It is found in the membrane. Visual pigments are the light-absorbing molecules that mediate vision. They consist of an apoprotein, opsin, covalently linked to cis-retinal. This opsin produces visual pigments with maximal absorption in the blue-green region of the spectrum. The polypeptide is Compound eye opsin BCRH2 (Hemigrapsus sanguineus (Asian shore crab)).